Reading from the N-terminus, the 238-residue chain is ATP-dependent dethiobiotin synthetase BioD (238 aa).

ATP is bound at residue 12–17; that stretch reads EVGKTV. T16 serves as a coordination point for Mg(2+). K37 is a catalytic residue. T41 provides a ligand contact to substrate. Residues D50, 109 to 112, 170 to 171, and 200 to 202 each bind ATP; these read EGAG, GS, and PAG. 2 residues coordinate Mg(2+): D50 and E109.

Belongs to the dethiobiotin synthetase family. In terms of assembly, homodimer. It depends on Mg(2+) as a cofactor.

It localises to the cytoplasm. The enzyme catalyses (7R,8S)-7,8-diammoniononanoate + CO2 + ATP = (4R,5S)-dethiobiotin + ADP + phosphate + 3 H(+). It participates in cofactor biosynthesis; biotin biosynthesis; biotin from 7,8-diaminononanoate: step 1/2. Functionally, catalyzes a mechanistically unusual reaction, the ATP-dependent insertion of CO2 between the N7 and N8 nitrogen atoms of 7,8-diaminopelargonic acid (DAPA, also called 7,8-diammoniononanoate) to form a ureido ring. The protein is ATP-dependent dethiobiotin synthetase BioD of Streptomyces coelicolor (strain ATCC BAA-471 / A3(2) / M145).